We begin with the raw amino-acid sequence, 91 residues long: Probable Fe(2+)-trafficking protein (91 aa).

The protein belongs to the Fe(2+)-trafficking protein family. As to quaternary structure, monomer.

Functionally, could be a mediator in iron transactions between iron acquisition and iron-requiring processes, such as synthesis and/or repair of Fe-S clusters in biosynthetic enzymes. This is Probable Fe(2+)-trafficking protein from Salmonella agona (strain SL483).